Reading from the N-terminus, the 446-residue chain is Histidine--tRNA ligase (446 aa).

The tract at residues Thr-403–Gln-422 is disordered.

The protein belongs to the class-II aminoacyl-tRNA synthetase family. As to quaternary structure, homodimer.

It is found in the cytoplasm. It catalyses the reaction tRNA(His) + L-histidine + ATP = L-histidyl-tRNA(His) + AMP + diphosphate + H(+). The chain is Histidine--tRNA ligase from Burkholderia thailandensis (strain ATCC 700388 / DSM 13276 / CCUG 48851 / CIP 106301 / E264).